We begin with the raw amino-acid sequence, 232 residues long: Small ribosomal subunit protein uS3 (232 aa).

A KH type-2 domain is found at 39–107 (IREILHKELK…DVVINIVEIR (69 aa)).

This sequence belongs to the universal ribosomal protein uS3 family. As to quaternary structure, part of the 30S ribosomal subunit. Forms a tight complex with proteins S10 and S14.

Binds the lower part of the 30S subunit head. Binds mRNA in the 70S ribosome, positioning it for translation. In Rhodopseudomonas palustris (strain HaA2), this protein is Small ribosomal subunit protein uS3.